We begin with the raw amino-acid sequence, 477 residues long: Glycogen synthase (477 aa).

Lys15 lines the ADP-alpha-D-glucose pocket.

The protein belongs to the glycosyltransferase 1 family. Bacterial/plant glycogen synthase subfamily.

The catalysed reaction is [(1-&gt;4)-alpha-D-glucosyl](n) + ADP-alpha-D-glucose = [(1-&gt;4)-alpha-D-glucosyl](n+1) + ADP + H(+). The protein operates within glycan biosynthesis; glycogen biosynthesis. In terms of biological role, synthesizes alpha-1,4-glucan chains using ADP-glucose. This Streptococcus pneumoniae serotype 19F (strain G54) protein is Glycogen synthase.